A 362-amino-acid polypeptide reads, in one-letter code: Histidinol-phosphate aminotransferase (362 aa).

Lys222 carries the N6-(pyridoxal phosphate)lysine modification.

This sequence belongs to the class-II pyridoxal-phosphate-dependent aminotransferase family. Histidinol-phosphate aminotransferase subfamily. As to quaternary structure, homodimer. It depends on pyridoxal 5'-phosphate as a cofactor.

The catalysed reaction is L-histidinol phosphate + 2-oxoglutarate = 3-(imidazol-4-yl)-2-oxopropyl phosphate + L-glutamate. Its pathway is amino-acid biosynthesis; L-histidine biosynthesis; L-histidine from 5-phospho-alpha-D-ribose 1-diphosphate: step 7/9. This chain is Histidinol-phosphate aminotransferase, found in Shewanella amazonensis (strain ATCC BAA-1098 / SB2B).